Consider the following 739-residue polypeptide: Long-chain-fatty-acid--CoA ligase ACSBG2 (739 aa).

ATP-binding positions include 287 to 295, 478 to 483, aspartate 556, arginine 571, and lysine 684; these read TSGTTGQPK and ELYGMS.

It belongs to the ATP-dependent AMP-binding enzyme family. Bubblegum subfamily.

The protein localises to the cytoplasm. It catalyses the reaction a long-chain fatty acid + ATP + CoA = a long-chain fatty acyl-CoA + AMP + diphosphate. The catalysed reaction is (5Z,8Z,11Z,14Z)-eicosatetraenoate + ATP + CoA = (5Z,8Z,11Z,14Z)-eicosatetraenoyl-CoA + AMP + diphosphate. The enzyme catalyses hexadecanoate + ATP + CoA = hexadecanoyl-CoA + AMP + diphosphate. It carries out the reaction (9Z)-octadecenoate + ATP + CoA = (9Z)-octadecenoyl-CoA + AMP + diphosphate. It catalyses the reaction (9Z,12Z)-octadecadienoate + ATP + CoA = (9Z,12Z)-octadecadienoyl-CoA + AMP + diphosphate. The catalysed reaction is tetracosanoate + ATP + CoA = tetracosanoyl-CoA + AMP + diphosphate. Functionally, catalyzes the conversion of fatty acids such as long chain and very long-chain fatty acids to their active form acyl-CoAs for both synthesis of cellular lipids, and degradation via beta-oxidation. Can activate diverse saturated, monosaturated and polyunsaturated fatty acids. This chain is Long-chain-fatty-acid--CoA ligase ACSBG2, found in Xenopus laevis (African clawed frog).